The following is a 427-amino-acid chain: Dihydroorotase (427 aa).

Zn(2+) is bound by residues histidine 60 and histidine 62. Substrate-binding positions include 62–64 (HLR) and asparagine 94. Zn(2+) contacts are provided by aspartate 152, histidine 179, and histidine 232. A substrate-binding site is contributed by asparagine 278. Aspartate 305 is a binding site for Zn(2+). The active site involves aspartate 305. Residues histidine 309 and 323-324 (FG) contribute to the substrate site.

This sequence belongs to the metallo-dependent hydrolases superfamily. DHOase family. Class I DHOase subfamily. It depends on Zn(2+) as a cofactor.

The enzyme catalyses (S)-dihydroorotate + H2O = N-carbamoyl-L-aspartate + H(+). It functions in the pathway pyrimidine metabolism; UMP biosynthesis via de novo pathway; (S)-dihydroorotate from bicarbonate: step 3/3. Functionally, catalyzes the reversible cyclization of carbamoyl aspartate to dihydroorotate. In Geobacillus sp. (strain WCH70), this protein is Dihydroorotase.